A 105-amino-acid chain; its full sequence is Small ribosomal subunit protein uS10 (105 aa).

It belongs to the universal ribosomal protein uS10 family. As to quaternary structure, part of the 30S ribosomal subunit.

In terms of biological role, involved in the binding of tRNA to the ribosomes. This chain is Small ribosomal subunit protein uS10, found in Nostoc punctiforme (strain ATCC 29133 / PCC 73102).